We begin with the raw amino-acid sequence, 239 residues long: Uridylate kinase (239 aa).

10 to 13 (KISG) lines the ATP pocket. The tract at residues 18–23 (GESGYG) is involved in allosteric activation by GTP. G52 is a binding site for UMP. Residues G53 and R57 each contribute to the ATP site. Residues D72 and 133-140 (TGNPYFTT) contribute to the UMP site. Residues T160, Y166, and D169 each contribute to the ATP site.

This sequence belongs to the UMP kinase family. As to quaternary structure, homohexamer.

It is found in the cytoplasm. The enzyme catalyses UMP + ATP = UDP + ADP. Its pathway is pyrimidine metabolism; CTP biosynthesis via de novo pathway; UDP from UMP (UMPK route): step 1/1. With respect to regulation, allosterically activated by GTP. Inhibited by UTP. In terms of biological role, catalyzes the reversible phosphorylation of UMP to UDP. This is Uridylate kinase from Chlorobaculum tepidum (strain ATCC 49652 / DSM 12025 / NBRC 103806 / TLS) (Chlorobium tepidum).